The chain runs to 505 residues: Flagellin (505 aa).

It belongs to the bacterial flagellin family.

The protein resides in the secreted. It is found in the bacterial flagellum. In terms of biological role, flagellin is the subunit protein which polymerizes to form the filaments of bacterial flagella. In Salmonella rostock, this protein is Flagellin (fliC).